A 63-amino-acid chain; its full sequence is Cytochrome c oxidase subunit 7C, mitochondrial (63 aa).

A mitochondrion-targeting transit peptide spans 1–16 (MLGQSIRRFTTSVVRR). The Mitochondrial matrix segment spans residues 17 to 33 (SHYEEGPGKNLPFSVEN). K25 is modified (N6-acetyllysine; alternate). K25 carries the N6-succinyllysine; alternate modification. The helical transmembrane segment at 34–60 (KWRLLLMMTVYFGSGFAAPFFIVRHQL) threads the bilayer. Residues 61–63 (LKK) lie on the Mitochondrial intermembrane side of the membrane.

It belongs to the cytochrome c oxidase VIIc family. As to quaternary structure, component of the cytochrome c oxidase (complex IV, CIV), a multisubunit enzyme composed of 14 subunits. The complex is composed of a catalytic core of 3 subunits MT-CO1, MT-CO2 and MT-CO3, encoded in the mitochondrial DNA, and 11 supernumerary subunits COX4I, COX5A, COX5B, COX6A, COX6B, COX6C, COX7A, COX7B, COX7C, COX8 and NDUFA4, which are encoded in the nuclear genome. The complex exists as a monomer or a dimer and forms supercomplexes (SCs) in the inner mitochondrial membrane with NADH-ubiquinone oxidoreductase (complex I, CI) and ubiquinol-cytochrome c oxidoreductase (cytochrome b-c1 complex, complex III, CIII), resulting in different assemblies (supercomplex SCI(1)III(2)IV(1) and megacomplex MCI(2)III(2)IV(2)). Interacts with RAB5IF.

It is found in the mitochondrion inner membrane. The protein operates within energy metabolism; oxidative phosphorylation. In terms of biological role, component of the cytochrome c oxidase, the last enzyme in the mitochondrial electron transport chain which drives oxidative phosphorylation. The respiratory chain contains 3 multisubunit complexes succinate dehydrogenase (complex II, CII), ubiquinol-cytochrome c oxidoreductase (cytochrome b-c1 complex, complex III, CIII) and cytochrome c oxidase (complex IV, CIV), that cooperate to transfer electrons derived from NADH and succinate to molecular oxygen, creating an electrochemical gradient over the inner membrane that drives transmembrane transport and the ATP synthase. Cytochrome c oxidase is the component of the respiratory chain that catalyzes the reduction of oxygen to water. Electrons originating from reduced cytochrome c in the intermembrane space (IMS) are transferred via the dinuclear copper A center (CU(A)) of subunit 2 and heme A of subunit 1 to the active site in subunit 1, a binuclear center (BNC) formed by heme A3 and copper B (CU(B)). The BNC reduces molecular oxygen to 2 water molecules using 4 electrons from cytochrome c in the IMS and 4 protons from the mitochondrial matrix. This chain is Cytochrome c oxidase subunit 7C, mitochondrial (Cox7c), found in Rattus norvegicus (Rat).